The sequence spans 190 residues: Elongation factor P (190 aa).

The protein belongs to the elongation factor P family.

It is found in the cytoplasm. It functions in the pathway protein biosynthesis; polypeptide chain elongation. In terms of biological role, involved in peptide bond synthesis. Stimulates efficient translation and peptide-bond synthesis on native or reconstituted 70S ribosomes in vitro. Probably functions indirectly by altering the affinity of the ribosome for aminoacyl-tRNA, thus increasing their reactivity as acceptors for peptidyl transferase. The chain is Elongation factor P from Sulfurihydrogenibium sp. (strain YO3AOP1).